The chain runs to 117 residues: UPF0102 protein FTF0898c (117 aa).

It belongs to the UPF0102 family.

The protein is UPF0102 protein FTF0898c of Francisella tularensis subsp. tularensis (strain FSC 198).